The chain runs to 148 residues: MKIILTQEVSGLGAPGDIVEVKNGYGRNYLLPQGFAIAWTKGAEKQVTLIKRARSAREIRDLGHANEVKGQLEGLKVTLKARAGDGGRLFGSVTAAEIVAAVKAAGGPTLDRRRLELPSHIKSIGSYPVRIKLHPEVTAAFDLSVVQG.

This sequence belongs to the bacterial ribosomal protein bL9 family.

In terms of biological role, binds to the 23S rRNA. The chain is Large ribosomal subunit protein bL9 from Salinispora arenicola (strain CNS-205).